Here is a 605-residue protein sequence, read N- to C-terminus: ABC transporter E family member 2 (605 aa).

One can recognise a 4Fe-4S ferredoxin-type domain in the interval 46-75 (KLAFISEELCIGCGICVKKCPFEAIQIINL). ABC transporter domains are found at residues 70–315 (IQII…FLAG) and 344–568 (IQSY…LSHL). ATP is bound by residues 110-117 (GTNGIGKS) and 381-388 (GENGTGKT).

Belongs to the ABC transporter superfamily. ABCE family. As to expression, expressed in roots, stems, leaves, flowers and siliques.

The protein resides in the membrane. This is ABC transporter E family member 2 (ABCE2) from Arabidopsis thaliana (Mouse-ear cress).